The primary structure comprises 431 residues: MLDPNLLRNELDAVAEKLLARRGFKLDVETLRKQEERRKVLQVETESLQAERNSRSKEIGAAKARGEDIEPLRREVNTLGEKLDTAKAELDQLQNEIRDLALTIPNLPDDSVPLGKDESQNKEVTRWGEPRKYDFAVRDHVELGEMAGGLDFAAAVKLTGARFVVMKGQIARLHRALAQFMLDLHTQQHGYQEAYVPYLVNHATLYGTGQLPKFGEDLFHTNPLSEEAESSQYALIPTAEVPLTNLVRDEILDEESLPLKMTAHTPCFRSEAGSYGRDTRGLIRMHQFDKVELVQIVRPEDSMQALEELTTHAETVLQLLKLPYRKVLLCTGDMGFGSTKTYDLEVWLPAQDTYREISSCSNMWDFQARRMQARCRSKSDKKTRLVHTLNGSGLAVGRTLVAVLENYQQADGRIEIPEVLRPYMGGLEFIG.

Residue 238 to 240 (TAE) coordinates L-serine. An ATP-binding site is contributed by 269–271 (RSE). E292 provides a ligand contact to L-serine. Position 356–359 (356–359 (EISS)) interacts with ATP. L-serine is bound at residue S392.

This sequence belongs to the class-II aminoacyl-tRNA synthetase family. Type-1 seryl-tRNA synthetase subfamily. As to quaternary structure, homodimer. The tRNA molecule binds across the dimer.

Its subcellular location is the cytoplasm. The catalysed reaction is tRNA(Ser) + L-serine + ATP = L-seryl-tRNA(Ser) + AMP + diphosphate + H(+). It catalyses the reaction tRNA(Sec) + L-serine + ATP = L-seryl-tRNA(Sec) + AMP + diphosphate + H(+). It functions in the pathway aminoacyl-tRNA biosynthesis; selenocysteinyl-tRNA(Sec) biosynthesis; L-seryl-tRNA(Sec) from L-serine and tRNA(Sec): step 1/1. In terms of biological role, catalyzes the attachment of serine to tRNA(Ser). Is also able to aminoacylate tRNA(Sec) with serine, to form the misacylated tRNA L-seryl-tRNA(Sec), which will be further converted into selenocysteinyl-tRNA(Sec). This is Serine--tRNA ligase from Pectobacterium atrosepticum (strain SCRI 1043 / ATCC BAA-672) (Erwinia carotovora subsp. atroseptica).